A 193-amino-acid chain; its full sequence is Glycerol-3-phosphate acyltransferase (193 aa).

The next 5 membrane-spanning stretches (helical) occupy residues 2–22, 51–71, 78–98, 112–132, and 154–174; these read AFII…AVIV, QAAF…VLIA, GVSL…PVYF, VLLG…VIVV, and IIAG…LIIW.

Belongs to the PlsY family. As to quaternary structure, probably interacts with PlsX.

Its subcellular location is the cell inner membrane. It catalyses the reaction an acyl phosphate + sn-glycerol 3-phosphate = a 1-acyl-sn-glycero-3-phosphate + phosphate. The protein operates within lipid metabolism; phospholipid metabolism. In terms of biological role, catalyzes the transfer of an acyl group from acyl-phosphate (acyl-PO(4)) to glycerol-3-phosphate (G3P) to form lysophosphatidic acid (LPA). This enzyme utilizes acyl-phosphate as fatty acyl donor, but not acyl-CoA or acyl-ACP. This Coxiella burnetii (strain CbuK_Q154) (Coxiella burnetii (strain Q154)) protein is Glycerol-3-phosphate acyltransferase.